We begin with the raw amino-acid sequence, 328 residues long: RNA 3'-terminal phosphate cyclase (328 aa).

Residues glutamine 100 and 276-280 contribute to the ATP site; that span reads HLADQ. The active-site Tele-AMP-histidine intermediate is histidine 302.

This sequence belongs to the RNA 3'-terminal cyclase family. Type 1 subfamily.

It is found in the cytoplasm. The catalysed reaction is a 3'-end 3'-phospho-ribonucleotide-RNA + ATP = a 3'-end 2',3'-cyclophospho-ribonucleotide-RNA + AMP + diphosphate. In terms of biological role, catalyzes the conversion of 3'-phosphate to a 2',3'-cyclic phosphodiester at the end of RNA. The mechanism of action of the enzyme occurs in 3 steps: (A) adenylation of the enzyme by ATP; (B) transfer of adenylate to an RNA-N3'P to produce RNA-N3'PP5'A; (C) and attack of the adjacent 2'-hydroxyl on the 3'-phosphorus in the diester linkage to produce the cyclic end product. The biological role of this enzyme is unknown but it is likely to function in some aspects of cellular RNA processing. The chain is RNA 3'-terminal phosphate cyclase (rtcA) from Archaeoglobus fulgidus (strain ATCC 49558 / DSM 4304 / JCM 9628 / NBRC 100126 / VC-16).